The primary structure comprises 549 residues: CTP synthase (549 aa).

Residues methionine 1 to leucine 270 are amidoligase domain. Serine 13 serves as a coordination point for CTP. Serine 13 contributes to the UTP binding site. ATP contacts are provided by residues serine 14–isoleucine 19 and aspartate 71. 2 residues coordinate Mg(2+): aspartate 71 and glutamate 144. Residues aspartate 151–glutamate 153, lysine 191–glutamine 196, and lysine 227 contribute to the CTP site. UTP is bound by residues lysine 191–glutamine 196 and lysine 227. In terms of domain architecture, Glutamine amidotransferase type-1 spans threonine 295–glutamine 547. Position 356 (glycine 356) interacts with L-glutamine. Cysteine 383 serves as the catalytic Nucleophile; for glutamine hydrolysis. L-glutamine contacts are provided by residues leucine 384–glutamine 387, glutamate 407, and arginine 473. Catalysis depends on residues histidine 520 and glutamate 522.

It belongs to the CTP synthase family. In terms of assembly, homotetramer.

The enzyme catalyses UTP + L-glutamine + ATP + H2O = CTP + L-glutamate + ADP + phosphate + 2 H(+). It catalyses the reaction L-glutamine + H2O = L-glutamate + NH4(+). The catalysed reaction is UTP + NH4(+) + ATP = CTP + ADP + phosphate + 2 H(+). Its pathway is pyrimidine metabolism; CTP biosynthesis via de novo pathway; CTP from UDP: step 2/2. With respect to regulation, allosterically activated by GTP, when glutamine is the substrate; GTP has no effect on the reaction when ammonia is the substrate. The allosteric effector GTP functions by stabilizing the protein conformation that binds the tetrahedral intermediate(s) formed during glutamine hydrolysis. Inhibited by the product CTP, via allosteric rather than competitive inhibition. Its function is as follows. Catalyzes the ATP-dependent amination of UTP to CTP with either L-glutamine or ammonia as the source of nitrogen. Regulates intracellular CTP levels through interactions with the four ribonucleotide triphosphates. This is CTP synthase from Cupriavidus metallidurans (strain ATCC 43123 / DSM 2839 / NBRC 102507 / CH34) (Ralstonia metallidurans).